The chain runs to 138 residues: Large ribosomal subunit protein uL16 (138 aa).

Residues 1 to 13 (MLQPARRKYRKEQ) are compositionally biased toward basic residues. The segment at 1-22 (MLQPARRKYRKEQKGRNTGVAT) is disordered.

Belongs to the universal ribosomal protein uL16 family. Part of the 50S ribosomal subunit.

Binds 23S rRNA and is also seen to make contacts with the A and possibly P site tRNAs. The chain is Large ribosomal subunit protein uL16 from Polaromonas naphthalenivorans (strain CJ2).